The sequence spans 419 residues: MNHQRVVVLGAGVTGKSAAEFLHKKGDFVIGIDGSWDALISCNFFHQRYLDKTENFPEDVDLFVRSPGIKTSHPLVIEAKRRDIPIVTDVQLAFQSPEFYQYPSLGITGSTGKTTTVLFLVHLLHSLGISAFAMGNIGFPILQAMYQKGVRVVEISSFQLTEQEQKIPVLSGAAILNISENHLDYHQTLHAYSEAKMNIAKCLQWPDSLWSGEGVSSGRSYLEYTEEIDSVLDKGGALKPLYLHDRNNYCAAYALAKEVTSVPLEAFLQAVQTFEKPPHRIEYLGEKDGVRYINDSKATTMSSVEKALMAVKENVIVIMGGRNKESNFTSLIPVLTQTVKHIVAMGECRKEIAQALSSSLPLTQARDLQEAVSIAQSIAQPGDVILLSPGCASFDQFRSFEERGDCFRQLVGDMEALKI.

ATP is bound at residue 109–115 (GSTGKTT).

Belongs to the MurCDEF family.

Its subcellular location is the cytoplasm. The catalysed reaction is UDP-N-acetyl-alpha-D-muramoyl-L-alanine + D-glutamate + ATP = UDP-N-acetyl-alpha-D-muramoyl-L-alanyl-D-glutamate + ADP + phosphate + H(+). It participates in cell wall biogenesis; peptidoglycan biosynthesis. Its function is as follows. Cell wall formation. Catalyzes the addition of glutamate to the nucleotide precursor UDP-N-acetylmuramoyl-L-alanine (UMA). This is UDP-N-acetylmuramoylalanine--D-glutamate ligase from Chlamydia felis (strain Fe/C-56) (Chlamydophila felis).